A 360-amino-acid polypeptide reads, in one-letter code: Photosystem II protein D1 (360 aa).

A run of 3 helical transmembrane segments spans residues 29–46 (YIGW…TATT), 118–133 (HFLL…QWEL), and 142–156 (WICV…AATA). Residue His-118 participates in chlorophyll a binding. Position 126 (Tyr-126) interacts with pheophytin a. Residues Asp-170 and Glu-189 each coordinate [CaMn4O5] cluster. A helical membrane pass occupies residues 197 to 218 (FHMLGVAGVFGGSLFSAMHGSL). Residue His-198 coordinates chlorophyll a. Residues His-215 and 264 to 265 (SF) contribute to the a quinone site. His-215 is a binding site for Fe cation. A Fe cation-binding site is contributed by His-272. The helical transmembrane segment at 274–288 (FLGAWPVIGIWFTAM) threads the bilayer. Residues His-332, Glu-333, Asp-342, and Ala-344 each coordinate [CaMn4O5] cluster. The propeptide occupies 345-360 (SGEQAPVALIAPAING).

Belongs to the reaction center PufL/M/PsbA/D family. PSII is composed of 1 copy each of membrane proteins PsbA, PsbB, PsbC, PsbD, PsbE, PsbF, PsbH, PsbI, PsbJ, PsbK, PsbL, PsbM, PsbT, PsbX, PsbY, PsbZ, Psb30/Ycf12, peripheral proteins PsbO, CyanoQ (PsbQ), PsbU, PsbV and a large number of cofactors. It forms dimeric complexes. Requires The D1/D2 heterodimer binds P680, chlorophylls that are the primary electron donor of PSII, and subsequent electron acceptors. It shares a non-heme iron and each subunit binds pheophytin, quinone, additional chlorophylls, carotenoids and lipids. D1 provides most of the ligands for the Mn4-Ca-O5 cluster of the oxygen-evolving complex (OEC). There is also a Cl(-1) ion associated with D1 and D2, which is required for oxygen evolution. The PSII complex binds additional chlorophylls, carotenoids and specific lipids. as cofactor. In terms of processing, tyr-161 forms a radical intermediate that is referred to as redox-active TyrZ, YZ or Y-Z. C-terminally processed by CtpA; processing is essential to allow assembly of the oxygen-evolving complex and thus photosynthetic growth.

It localises to the cellular thylakoid membrane. The enzyme catalyses 2 a plastoquinone + 4 hnu + 2 H2O = 2 a plastoquinol + O2. In terms of biological role, photosystem II (PSII) is a light-driven water:plastoquinone oxidoreductase that uses light energy to abstract electrons from H(2)O, generating O(2) and a proton gradient subsequently used for ATP formation. It consists of a core antenna complex that captures photons, and an electron transfer chain that converts photonic excitation into a charge separation. The D1/D2 (PsbA/PsbD) reaction center heterodimer binds P680, the primary electron donor of PSII as well as several subsequent electron acceptors. The protein is Photosystem II protein D1 of Microcystis aeruginosa (strain NIES-843 / IAM M-2473).